A 418-amino-acid polypeptide reads, in one-letter code: Queuine tRNA-ribosyltransferase accessory subunit 2 (418 aa).

Zn(2+)-binding residues include C325, C327, C330, and H356.

It belongs to the queuine tRNA-ribosyltransferase family. QTRT2 subfamily. In terms of assembly, heterodimer of a catalytic subunit and an accessory subunit. The cofactor is Zn(2+).

Its subcellular location is the cytoplasm. Its function is as follows. Non-catalytic subunit of the queuine tRNA-ribosyltransferase (TGT) that catalyzes the base-exchange of a guanine (G) residue with queuine (Q) at position 34 (anticodon wobble position) in tRNAs with GU(N) anticodons (tRNA-Asp, -Asn, -His and -Tyr), resulting in the hypermodified nucleoside queuosine (7-(((4,5-cis-dihydroxy-2-cyclopenten-1-yl)amino)methyl)-7-deazaguanosine). The polypeptide is Queuine tRNA-ribosyltransferase accessory subunit 2 (Drosophila melanogaster (Fruit fly)).